The following is a 426-amino-acid chain: Serine hydroxymethyltransferase (426 aa).

Residues Leu115 and 119–121 (GHI) contribute to the (6S)-5,6,7,8-tetrahydrofolate site. An N6-(pyridoxal phosphate)lysine modification is found at Lys225.

The protein belongs to the SHMT family. In terms of assembly, homodimer. Pyridoxal 5'-phosphate serves as cofactor.

The protein resides in the cytoplasm. It participates in amino-acid biosynthesis; glycine biosynthesis; glycine from L-serine: step 1/1. Its function is as follows. Catalyzes the reversible interconversion of serine and glycine with a modified folate serving as the one-carbon carrier. Also exhibits a pteridine-independent aldolase activity toward beta-hydroxyamino acids, producing glycine and aldehydes, via a retro-aldol mechanism. The polypeptide is Serine hydroxymethyltransferase (Thermoplasma acidophilum (strain ATCC 25905 / DSM 1728 / JCM 9062 / NBRC 15155 / AMRC-C165)).